Reading from the N-terminus, the 170-residue chain is Probable T4-type lysozyme 2 (170 aa).

Catalysis depends on E13, which acts as the Proton donor. The Nucleophile role is filled by D22.

It belongs to the glycosyl hydrolase 24 family.

It catalyses the reaction Hydrolysis of (1-&gt;4)-beta-linkages between N-acetylmuramic acid and N-acetyl-D-glucosamine residues in a peptidoglycan and between N-acetyl-D-glucosamine residues in chitodextrins.. This chain is Probable T4-type lysozyme 2, found in Dictyostelium discoideum (Social amoeba).